The sequence spans 992 residues: Meckelin (992 aa).

Residues 1-35 (MVMRTRPLAAMAVRSCFSALTGTVYLLLVLCEVSW) form the signal peptide. The Extracellular segment spans residues 36-516 (AQIFSFPFQR…SVKYEMNQGD (481 aa)). Positions 37 to 280 (QIFSFPFQRP…FHYVFEGAAG (244 aa)) are cysteine-rich. 12 disulfide bridges follow: cysteine 49-cysteine 62, cysteine 65-cysteine 78, cysteine 80-cysteine 97, cysteine 100-cysteine 114, cysteine 117-cysteine 127, cysteine 129-cysteine 150, cysteine 153-cysteine 170, cysteine 173-cysteine 184, cysteine 186-cysteine 197, cysteine 237-cysteine 246, cysteine 253-cysteine 268, and cysteine 354-cysteine 375. A glycan (N-linked (GlcNAc...) asparagine) is linked at asparagine 242. A helical transmembrane segment spans residues 517-545 (AFVQTDIALGVLGGLAVLSSLLKTAGWKR). The Cytoplasmic segment spans residues 546–555 (RIGSPMIDLQ). A helical membrane pass occupies residues 556-587 (TVMKFLLYYAGDLANVFFIITVGTGLYWLIFF). Topologically, residues 588–600 (KAQKSVSVLLPMP) are extracellular. The chain crosses the membrane as a helical span at residues 601–628 (VQEERFVTYVGCAFAMKALQFLHKLISQ). Residues 629–667 (ITIDIFFIDWERPKGKVLKAVEGEGGVRSATVPVSIWRT) lie on the Cytoplasmic side of the membrane. Residues 668-676 (YFVANEWNE) constitute an intramembrane region (helical). The chain crosses the membrane as a discontinuously helical span at residues 668–698 (YFVANEWNEIQTVRKINPLFQVLTTLFFLEV). Residues 677-685 (IQTVRKINP) lie within the membrane without spanning it. An intramembrane region (helical) is located at residues 686-698 (LFQVLTTLFFLEV). Residues 699–728 (VGFKNLALMDPSSSLSRSLSDYAAPYSRIL) lie on the Extracellular side of the membrane. An intramembrane region (helical) is located at residues 729 to 754 (RYAVATTIWLVIGIVQVVFFAAFYER). A discontinuously helical membrane pass occupies residues 729-768 (RYAVATTIWLVIGIVQVVFFAAFYERFIEDKIRQFVDLCS). An intramembrane segment occupies 755–759 (FIEDK). The segment at residues 760-768 (IRQFVDLCS) is an intramembrane region (helical). Topologically, residues 769 to 923 (MSNVSVFLLS…SIFYNDESHS (155 aa)) are cytoplasmic. Positions 924-926 (FSS) form an intramembrane region, helical. The discontinuously helical transmembrane segment at 924-949 (FSSVLYYGNEATLLIFDLLFFCVVDL) threads the bilayer. Residues 927 to 933 (VLYYGNE) lie within the membrane without spanning it. The segment at residues 934-949 (ATLLIFDLLFFCVVDL) is an intramembrane region (helical). Over 950–954 (ACQNF) the chain is Extracellular. A helical transmembrane segment spans residues 955–982 (VLASFLTYLQQEIFRFIRNTVGQKNLAT). At 983–992 (KTLVDERFLI) the chain is on the cytoplasmic side.

As to quaternary structure, homodimer. Part of the tectonic-like complex (also named B9 complex). Interacts with DNAJB9, DNAJC10 and mutated SFTPC. Interacts with SYNE2 during the early establishment of cell polarity. Interacts (via C-terminus) with FLNA. Interacts with TMEM218. Interacts with WNT5A. Interacts with ROR2.

It is found in the cell membrane. It localises to the endoplasmic reticulum membrane. The protein localises to the cytoplasm. Its subcellular location is the cytoskeleton. The protein resides in the cilium basal body. In terms of biological role, part of the tectonic-like complex which is required for tissue-specific ciliogenesis and may regulate ciliary membrane composition. Involved in centrosome migration to the apical cell surface during early ciliogenesis. Required for ciliary structure and function, including a role in regulating length and appropriate number through modulating centrosome duplication. Is a key regulator of stereociliary bundle orientation. Required for epithelial cell branching morphology. Essential for endoplasmic reticulum-associated degradation (ERAD) of surfactant protein C (sftpc). Involved in the negative regulation of canonical Wnt signaling, and activation of the non-canonical cascade stimulated by WNT5A. In non-canonical Wnt signaling, it may act as ROR2 coreceptor. This Rattus norvegicus (Rat) protein is Meckelin (Tmem67).